Here is a 477-residue protein sequence, read N- to C-terminus: MVFRSGEGHSLQWPGPEGGTGCTGPQSMLRATLLLVSLLWGARGTPSASLSPALGHPMPLTRGRYLSIGDGSVMEFEFPEESEGIIVITSQYPGQGNGTGPSPMLRVTSLDPEVLAIKNVSSIALGSGGSFVVSIRSGLPGIAPLHIQLTDPREAPPRLIEERRDFCIKVSPAEDTPITLGTDLVHFSENPILYLLLPLIFVNKCSFGCKVELEVLKGLLQNPQPMLLGLLGQFLVMPFYAFLMAKVFMLPKALALGLIITCSSPGGGGSYLFSLLLGGDVTLAISMTFISTVAATGFLPLSSAIYSRLLSIHETLHVPVSKILGTLLFIAIPIAAGVVIKSKLPKFSQLLLHVIKPFSFVLLLGGLFLAYRMGVFILAGVRLPIVLVGFTVPLVGLLVGYGLATCLKLPVAQRRTVSIEVGVQNSLLALAMLQLSLRRLQADYASQAPFLVALSGTSEMLALVIGHFIYSSVCAVP.

Positions 1–21 are disordered; sequence MVFRSGEGHSLQWPGPEGGTG. 8 helical membrane passes run 225 to 245, 253 to 273, 281 to 301, 320 to 340, 361 to 381, 383 to 403, 417 to 437, and 450 to 470; these read PMLL…FLMA, ALAL…SYLF, VTLA…FLPL, VSKI…GVVI, VLLL…LAGV, LPIV…GYGL, VSIE…QLSL, and FLVA…HFIY.

Belongs to the bile acid:sodium symporter (BASS) (TC 2.A.28) family.

The protein resides in the membrane. Functionally, the ubiquitous expression and the conservation of the sequence in distant animal species suggest that the gene codes for a protein with housekeeping functions. This is P3 protein (SLC10A3) from Bos taurus (Bovine).